The primary structure comprises 432 residues: Adenylosuccinate synthetase (432 aa).

GTP contacts are provided by residues 12–18 and 40–42; these read GDEGKGK and GHT. Asp-13 (proton acceptor) is an active-site residue. 2 residues coordinate Mg(2+): Asp-13 and Gly-40. IMP contacts are provided by residues 13 to 16, 38 to 41, Thr-132, Arg-146, Gln-226, Thr-241, and Arg-305; these read DEGK and NAGH. His-41 functions as the Proton donor in the catalytic mechanism. 301 to 307 provides a ligand contact to substrate; that stretch reads VVTGRKR. GTP is bound by residues Arg-307, 333–335, and 415–417; these read KLD and STS.

Belongs to the adenylosuccinate synthetase family. In terms of assembly, homodimer. Mg(2+) serves as cofactor.

It localises to the cytoplasm. It catalyses the reaction IMP + L-aspartate + GTP = N(6)-(1,2-dicarboxyethyl)-AMP + GDP + phosphate + 2 H(+). It participates in purine metabolism; AMP biosynthesis via de novo pathway; AMP from IMP: step 1/2. In terms of biological role, plays an important role in the de novo pathway of purine nucleotide biosynthesis. Catalyzes the first committed step in the biosynthesis of AMP from IMP. This chain is Adenylosuccinate synthetase, found in Rhizobium johnstonii (strain DSM 114642 / LMG 32736 / 3841) (Rhizobium leguminosarum bv. viciae).